The chain runs to 366 residues: Chorismate synthase (366 aa).

NADP(+)-binding residues include Arg48 and Arg54. Residues 125 to 127 (RSS), 238 to 239 (NA), Gly278, 293 to 297 (KPTSS), and Arg319 each bind FMN.

It belongs to the chorismate synthase family. In terms of assembly, homotetramer. FMNH2 is required as a cofactor.

It carries out the reaction 5-O-(1-carboxyvinyl)-3-phosphoshikimate = chorismate + phosphate. Its pathway is metabolic intermediate biosynthesis; chorismate biosynthesis; chorismate from D-erythrose 4-phosphate and phosphoenolpyruvate: step 7/7. In terms of biological role, catalyzes the anti-1,4-elimination of the C-3 phosphate and the C-6 proR hydrogen from 5-enolpyruvylshikimate-3-phosphate (EPSP) to yield chorismate, which is the branch point compound that serves as the starting substrate for the three terminal pathways of aromatic amino acid biosynthesis. This reaction introduces a second double bond into the aromatic ring system. This Methylococcus capsulatus (strain ATCC 33009 / NCIMB 11132 / Bath) protein is Chorismate synthase.